Consider the following 158-residue polypeptide: Small ribosomal subunit protein uS7c (158 aa).

Belongs to the universal ribosomal protein uS7 family. As to quaternary structure, part of the 30S ribosomal subunit.

It localises to the plastid. Its subcellular location is the chloroplast. One of the primary rRNA binding proteins, it binds directly to 16S rRNA where it nucleates assembly of the head domain of the 30S subunit. This Trieres chinensis (Marine centric diatom) protein is Small ribosomal subunit protein uS7c (rps7).